A 287-amino-acid polypeptide reads, in one-letter code: ATP synthase gamma chain (287 aa).

Belongs to the ATPase gamma chain family. F-type ATPases have 2 components, CF(1) - the catalytic core - and CF(0) - the membrane proton channel. CF(1) has five subunits: alpha(3), beta(3), gamma(1), delta(1), epsilon(1). CF(0) has three main subunits: a, b and c.

It localises to the cell inner membrane. In terms of biological role, produces ATP from ADP in the presence of a proton gradient across the membrane. The gamma chain is believed to be important in regulating ATPase activity and the flow of protons through the CF(0) complex. In Shigella boydii serotype 4 (strain Sb227), this protein is ATP synthase gamma chain.